A 342-amino-acid chain; its full sequence is Ferredoxin--NADP reductase (342 aa).

Residues C17, D36, Q44, Y49, V89, F124, D289, and T330 each contribute to the FAD site.

It belongs to the ferredoxin--NADP reductase type 2 family. As to quaternary structure, homodimer. The cofactor is FAD.

It carries out the reaction 2 reduced [2Fe-2S]-[ferredoxin] + NADP(+) + H(+) = 2 oxidized [2Fe-2S]-[ferredoxin] + NADPH. This is Ferredoxin--NADP reductase from Nitrobacter winogradskyi (strain ATCC 25391 / DSM 10237 / CIP 104748 / NCIMB 11846 / Nb-255).